The sequence spans 137 residues: Acetyltransferase Atu2258 (137 aa).

The region spanning M1 to F137 is the N-acetyltransferase domain. CoA contacts are provided by residues L66 to V68, G74, and R108 to Y110.

Functionally, catalyzes the transfer of an acetyl group from acetyl coenzyme A (AcCoA) to an acceptor substrate and releases both CoA and the acetylated product. It prefers glucosamine 6-phosphate or dopamine. It can also use the thialysine, N(8)-acetylspermidine, chloramphenicol, puromycin, polymyxin B, and 4-aminobutyrate ethyl ester. The protein is Acetyltransferase Atu2258 of Agrobacterium fabrum (strain C58 / ATCC 33970) (Agrobacterium tumefaciens (strain C58)).